Consider the following 508-residue polypeptide: Probable G-protein coupled receptor 101 (508 aa).

Over 1-35 (MTSTCTNSTRESNSSHTCMPLSKMPISLAHGIIRS) the chain is Extracellular. 2 N-linked (GlcNAc...) asparagine glycosylation sites follow: Asn7 and Asn13. A helical membrane pass occupies residues 36–56 (TVLVIFLAASFVGNIVLALVL). At 57–68 (QRKPQLLQVTNR) the chain is on the cytoplasmic side. A helical transmembrane segment spans residues 69 to 89 (FIFNLLVTDLLQISLVAPWVV). The Extracellular segment spans residues 90 to 106 (ATSVPLFWPLNSHFCTA). Residues Cys104 and Cys182 are joined by a disulfide bond. A helical transmembrane segment spans residues 107-127 (LVSLTHLFAFASVNTIVVVSV). Residues 128-149 (DRYLSIIHPLSYPSKMTQRRGY) are Cytoplasmic-facing. Residues 150–170 (LLLYGTWIVAILQSTPPLYGW) traverse the membrane as a helical segment. Over 171-196 (GQAAFDERNALCSMIWGASPSYTILS) the chain is Extracellular. The helical transmembrane segment at 197–217 (VVSFIVIPLIVMIACYSVVFC) threads the bilayer. The Cytoplasmic segment spans residues 218–399 (AARRQHALLY…PRCYQCKAAK (182 aa)). A disordered region spans residues 244 to 338 (NEDEEGAEKK…ENSMKADKGR (95 aa)). Composition is skewed to basic and acidic residues over residues 250 to 288 (AEKK…KAKE) and 318 to 338 (MEGK…DKGR). Residues 400–420 (VIFIIIFSYVLSLGPYCFLAV) form a helical membrane-spanning segment. At 421–433 (LAVWVDVETQVPQ) the chain is on the extracellular side. A helical transmembrane segment spans residues 434–454 (WVITIIIWLFFLQCCIHPYVY). The Cytoplasmic portion of the chain corresponds to 455–508 (GYMHKTIKKEIQDMLKKFFCKEKPPKEDSHPDLPGTEGGTEGKIVPSYDSATFP). Over residues 476–485 (EKPPKEDSHP) the composition is skewed to basic and acidic residues. The disordered stretch occupies residues 476 to 508 (EKPPKEDSHPDLPGTEGGTEGKIVPSYDSATFP).

It belongs to the G-protein coupled receptor 1 family.

It is found in the cell membrane. Its function is as follows. Orphan receptor. The polypeptide is Probable G-protein coupled receptor 101 (GPR101) (Homo sapiens (Human)).